Here is a 326-residue protein sequence, read N- to C-terminus: Adenosine receptor A1 (326 aa).

Over 1–10 (MPHSVSAFQA) the chain is Extracellular. The helical transmembrane segment at 11–33 (AYIGIEVLIALVSVPGNVLVIWA) threads the bilayer. Residues 34 to 46 (VKVNQALRDATFC) lie on the Cytoplasmic side of the membrane. Residues 47-69 (FIASLAVADVAVGALVIPLAILI) traverse the membrane as a helical segment. Residues 70 to 80 (NIGPQTYFHTC) lie on the Extracellular side of the membrane. C80 and C169 are oxidised to a cystine. Residues 81–102 (LMVACPVLILTQSSILALLAIA) traverse the membrane as a helical segment. The Cytoplasmic segment spans residues 103–123 (VDRYLRVKIPLRYKTVVTPRR). Residues 124 to 146 (AAVAIAGCWILSLVVGLTPMFGW) form a helical membrane-spanning segment. Over 147 to 176 (NNLSKIEMAWAANGSVGEPVIKCEFEKVIS) the chain is Extracellular. Residue N159 is glycosylated (N-linked (GlcNAc...) asparagine). A helical membrane pass occupies residues 177-201 (MEYMVYFNFFVWVLPPLLLMVLIYL). Residues 202-235 (EVFYLIRKQLSKKVSASSGDPQKYYGKELKIAKS) are Cytoplasmic-facing. A helical membrane pass occupies residues 236–259 (LALILFLFALSWLPLHILNCITLF). Topologically, residues 260–267 (CPTCHKPT) are extracellular. A helical membrane pass occupies residues 268–292 (ILTYIAIFLTHGNSAMNPIVYAFRI). Residues 293–326 (QKFRVTFLKIWNDHFRCQPEPPIDEDLPEEKVDD) lie on the Cytoplasmic side of the membrane. A lipid anchor (S-palmitoyl cysteine) is attached at C309.

Belongs to the G-protein coupled receptor 1 family.

It is found in the cell membrane. Receptor for adenosine. The activity of this receptor is mediated by G proteins which inhibit adenylyl cyclase. The protein is Adenosine receptor A1 (ADORA1) of Cavia porcellus (Guinea pig).